We begin with the raw amino-acid sequence, 324 residues long: MATH domain and coiled-coil domain-containing protein At3g44790 (324 aa).

Residues 3–125 (YEKFTWVIKN…NNEVKIVVEV (123 aa)) enclose the MATH domain. Residues 241–309 (FKVDWLERKL…ALLEKEKAKS (69 aa)) are a coiled coil.

This is MATH domain and coiled-coil domain-containing protein At3g44790 from Arabidopsis thaliana (Mouse-ear cress).